Consider the following 135-residue polypeptide: Ribonuclease P protein component (135 aa).

The disordered stretch occupies residues 115–135; it reads ETEPVSPVSPTSLPQNERGSP. A compositionally biased stretch (polar residues) spans 122–135; sequence VSPTSLPQNERGSP.

This sequence belongs to the RnpA family. As to quaternary structure, consists of a catalytic RNA component (M1 or rnpB) and a protein subunit.

It catalyses the reaction Endonucleolytic cleavage of RNA, removing 5'-extranucleotides from tRNA precursor.. Functionally, RNaseP catalyzes the removal of the 5'-leader sequence from pre-tRNA to produce the mature 5'-terminus. It can also cleave other RNA substrates such as 4.5S RNA. The protein component plays an auxiliary but essential role in vivo by binding to the 5'-leader sequence and broadening the substrate specificity of the ribozyme. This Chloroflexus aggregans (strain MD-66 / DSM 9485) protein is Ribonuclease P protein component.